Reading from the N-terminus, the 920-residue chain is Chitin synthase C (920 aa).

Disordered regions lie at residues 1 to 41 (MSYN…NAYQ) and 140 to 173 (IPML…SPAP). Over residues 154–163 (YSDEYQVEEQ) the composition is skewed to acidic residues. Helical transmembrane passes span 466 to 486 (SAFG…FVAL), 564 to 584 (RWLN…YQIW), 608 to 628 (LFAW…TTYL), 640 to 660 (VLGV…FVLA), and 675 to 695 (MVYF…FVTV). Asn-715 carries an N-linked (GlcNAc...) asparagine glycan. Transmembrane regions (helical) follow at residues 718 to 738 (FFTI…ASII), 749 to 769 (FIQY…YAFC), 847 to 867 (AVVL…LSAA), and 892 to 912 (VVLW…LWYL).

This sequence belongs to the chitin synthase family. Class I subfamily.

The protein localises to the cell membrane. It catalyses the reaction [(1-&gt;4)-N-acetyl-beta-D-glucosaminyl](n) + UDP-N-acetyl-alpha-D-glucosamine = [(1-&gt;4)-N-acetyl-beta-D-glucosaminyl](n+1) + UDP + H(+). Its function is as follows. Polymerizes chitin, a structural polymer of the cell wall and septum, by transferring the sugar moiety of UDP-GlcNAc to the non-reducing end of the growing chitin polymer. Involved in hyphal growth. The chain is Chitin synthase C from Aspergillus oryzae (strain ATCC 42149 / RIB 40) (Yellow koji mold).